Here is a 738-residue protein sequence, read N- to C-terminus: Squalene hopane cyclase afumA (738 aa).

PFTB repeat units lie at residues 132 to 173 (GSQY…RIIG) and 321 to 361 (RRRC…KLHD). D460 acts as the Proton donor in catalysis. PFTB repeat units lie at residues 482–523 (VRDA…ESLC), 581–621 (CARA…QYFK), and 634–675 (AARA…SQTA).

This sequence belongs to the terpene cyclase/mutase family.

It functions in the pathway secondary metabolite biosynthesis. In terms of biological role, squalene hopane cyclase; part of the gene cluster that mediates the biosynthesis fumihopaside A, a hopane-type glucoside that enhances the thermotolerance and UV resistance of N.fumigata. The first step of fumihopaside A biosynthesis is performed by the squalene hopane cyclase afumA that catalyzes the cyclization of 3S-oxidosqualene into the hopene 21-beta-H-hopane-3-beta,22-diol. The cytochrome P450 monooxygenase afumB is responsible for both hydroxylation at C-24 and oxidations at C-30 of the afumA product. The glycosyltransferase afumC then catalyzes the glycosylation at C-24, using UDP-D-glucose as a donor, to produce fumihopaside A. AfumC is also able to accept UDP-D-galactose and UDP-D-glucuronic acid as donors to yield minor derivatives. Fumihopaside B, another minor derivative produced, is different from fumihopaside A due to the presence of a double bond between C-22 and C-29. The sequence is that of Squalene hopane cyclase afumA from Aspergillus fumigatus (strain CBS 144.89 / FGSC A1163 / CEA10) (Neosartorya fumigata).